We begin with the raw amino-acid sequence, 710 residues long: Bifunctional lysine-specific demethylase and histidyl-hydroxylase NO66 (710 aa).

The tract at residues 103–137 (TDEMNKTKKKQKKIMKKEIRKRTKRKRKSVNKREL) is disordered. Residues 109 to 132 (TKKKQKKIMKKEIRKRTKRKRKSV) show a composition bias toward basic residues. The JmjC domain occupies 359–506 (CSIQLTNPQS…DLLERVIPPA (148 aa)). 3 residues coordinate Fe cation: His405, Asp407, and His472.

The protein belongs to the ROX family. NO66 subfamily. Requires Fe(2+) as cofactor.

The protein resides in the nucleus. It catalyses the reaction N(6),N(6)-dimethyl-L-lysyl(36)-[histone H3] + 2 2-oxoglutarate + 2 O2 = L-lysyl(36)-[histone H3] + 2 formaldehyde + 2 succinate + 2 CO2. Oxygenase that can act as both a histone lysine demethylase and a ribosomal histidine hydroxylase. Specifically demethylates 'Lys-4' (H3K4me) and 'Lys-36' (H3K36me) of histone H3, thereby playing a central role in histone code. This Brugia malayi (Filarial nematode worm) protein is Bifunctional lysine-specific demethylase and histidyl-hydroxylase NO66.